We begin with the raw amino-acid sequence, 340 residues long: Serine/threonine-protein kinase PDIK1L (340 aa).

The 326-residue stretch at 8–333 folds into the Protein kinase domain; the sequence is YDLIREVGRG…LELRLVQIAF (326 aa). Residues 14 to 22 and lysine 37 each bind ATP; that span reads VGRGSYGVV. Residue aspartate 164 is the Proton acceptor of the active site.

The protein belongs to the protein kinase superfamily. Ser/Thr protein kinase family.

The protein resides in the nucleus. It catalyses the reaction L-seryl-[protein] + ATP = O-phospho-L-seryl-[protein] + ADP + H(+). The enzyme catalyses L-threonyl-[protein] + ATP = O-phospho-L-threonyl-[protein] + ADP + H(+). The chain is Serine/threonine-protein kinase PDIK1L (PDIK1L) from Pongo abelii (Sumatran orangutan).